The primary structure comprises 170 residues: MSLPNPAELLPRMASDLRAHLAERGIERPRYVGIHTGGIWVAEALLKALGNEEPLGTLDVSFYRDDFTRNGLHPQVRPSALPFEIDGQHLVLVDDVLMSGRTIRAALNELFDYGRPASVTLVCLLDLNARELPIRPDVVGQTLSLGRDERVKLVGPAPLALERKVLSPAS.

The PRPP-binding motif lies at 90–102 (LVLVDDVLMSGRT).

Belongs to the purine/pyrimidine phosphoribosyltransferase family. PyrR subfamily.

It carries out the reaction UMP + diphosphate = 5-phospho-alpha-D-ribose 1-diphosphate + uracil. Regulates the transcription of the pyrimidine nucleotide (pyr) operon in response to exogenous pyrimidines. Functionally, also displays a weak uracil phosphoribosyltransferase activity which is not physiologically significant. This Pseudomonas paraeruginosa (strain DSM 24068 / PA7) (Pseudomonas aeruginosa (strain PA7)) protein is Bifunctional protein PyrR.